The primary structure comprises 185 residues: Ribosome-recycling factor (185 aa).

Belongs to the RRF family.

It localises to the cytoplasm. Responsible for the release of ribosomes from messenger RNA at the termination of protein biosynthesis. May increase the efficiency of translation by recycling ribosomes from one round of translation to another. This chain is Ribosome-recycling factor, found in Pseudomonas aeruginosa (strain LESB58).